Reading from the N-terminus, the 332-residue chain is Holliday junction branch migration complex subunit RuvB (332 aa).

Residues 1–181 (MERIISELEM…FGVSHKMEYY (181 aa)) are large ATPase domain (RuvB-L). Residues Leu-20, Arg-21, Gly-62, Lys-65, Thr-66, Thr-67, Arg-171, Tyr-181, and Arg-218 each contribute to the ATP site. Residue Thr-66 coordinates Mg(2+). The tract at residues 182 to 252 (NENEIKSIII…SAKNALDMLG (71 aa)) is small ATPAse domain (RuvB-S). The head domain (RuvB-H) stretch occupies residues 255–332 (SNGLDDLDRN…QHFKKVEVKI (78 aa)). DNA is bound by residues Arg-291, Arg-310, and Arg-315.

It belongs to the RuvB family. In terms of assembly, homohexamer. Forms an RuvA(8)-RuvB(12)-Holliday junction (HJ) complex. HJ DNA is sandwiched between 2 RuvA tetramers; dsDNA enters through RuvA and exits via RuvB. An RuvB hexamer assembles on each DNA strand where it exits the tetramer. Each RuvB hexamer is contacted by two RuvA subunits (via domain III) on 2 adjacent RuvB subunits; this complex drives branch migration. In the full resolvosome a probable DNA-RuvA(4)-RuvB(12)-RuvC(2) complex forms which resolves the HJ.

It localises to the cytoplasm. The enzyme catalyses ATP + H2O = ADP + phosphate + H(+). Its function is as follows. The RuvA-RuvB-RuvC complex processes Holliday junction (HJ) DNA during genetic recombination and DNA repair, while the RuvA-RuvB complex plays an important role in the rescue of blocked DNA replication forks via replication fork reversal (RFR). RuvA specifically binds to HJ cruciform DNA, conferring on it an open structure. The RuvB hexamer acts as an ATP-dependent pump, pulling dsDNA into and through the RuvAB complex. RuvB forms 2 homohexamers on either side of HJ DNA bound by 1 or 2 RuvA tetramers; 4 subunits per hexamer contact DNA at a time. Coordinated motions by a converter formed by DNA-disengaged RuvB subunits stimulates ATP hydrolysis and nucleotide exchange. Immobilization of the converter enables RuvB to convert the ATP-contained energy into a lever motion, pulling 2 nucleotides of DNA out of the RuvA tetramer per ATP hydrolyzed, thus driving DNA branch migration. The RuvB motors rotate together with the DNA substrate, which together with the progressing nucleotide cycle form the mechanistic basis for DNA recombination by continuous HJ branch migration. Branch migration allows RuvC to scan DNA until it finds its consensus sequence, where it cleaves and resolves cruciform DNA. The polypeptide is Holliday junction branch migration complex subunit RuvB (Fusobacterium nucleatum subsp. nucleatum (strain ATCC 25586 / DSM 15643 / BCRC 10681 / CIP 101130 / JCM 8532 / KCTC 2640 / LMG 13131 / VPI 4355)).